The chain runs to 386 residues: ABC transporter permease protein NatB (386 aa).

A run of 6 helical transmembrane segments spans residues 19 to 39 (TILL…FFYE), 172 to 192 (AIML…SGAM), 226 to 246 (WLAV…FLIL), 273 to 293 (ALII…ISIM), 300 to 320 (AQSY…FIFS), and 353 to 373 (ATIL…FLLA).

As to quaternary structure, the complex is composed of NatA and NatB.

The protein localises to the cell membrane. It carries out the reaction Na(+)(in) + ATP + H2O = Na(+)(out) + ADP + phosphate + H(+). In terms of biological role, part of an ABC transporter that catalyzes ATP-dependent electrogenic sodium extrusion. The polypeptide is ABC transporter permease protein NatB (Bacillus subtilis (strain 168)).